The chain runs to 228 residues: Sodium channel regulatory subunit beta-4 (228 aa).

The first 30 residues, 1 to 30, serve as a signal peptide directing secretion; that stretch reads MPGAGDGGKAPARWLGTGLLGLFLLPVTLS. The Ig-like C2-type domain occupies 31–148; sequence LEVSVGKATD…NNLQHHATIF (118 aa). Topologically, residues 31 to 162 are extracellular; the sequence is LEVSVGKATD…DRLEEVDNTV (132 aa). Residues N45, N71, and N113 are each glycosylated (N-linked (GlcNAc...) asparagine). C53 and C131 are joined by a disulfide. Residues 163–183 traverse the membrane as a helical segment; the sequence is TLIILAVVGGVIGLLILILLI. Over 184–228 the chain is Cytoplasmic; it reads KKLIIFILKKTREKKKECLVSSSGNDNTENGLPGSKAEEKPPSKV. A disordered region spans residues 200 to 228; that stretch reads ECLVSSSGNDNTENGLPGSKAEEKPPSKV. Over residues 203–213 the composition is skewed to polar residues; sequence VSSSGNDNTEN. Over residues 219-228 the composition is skewed to basic and acidic residues; sequence KAEEKPPSKV.

The protein belongs to the sodium channel auxiliary subunit SCN4B (TC 8.A.17) family. In terms of assembly, a voltage-gated sodium (Nav) channel consists of an ion-conducting pore-forming alpha subunit functional on its own that is regulated by one or more beta subunits. The beta subunit SCN4B is disulfide-linked to the pore-forming alpha subunit. Interacts with SCN1A; regulatory subunit of SCN1A/Nav1.1. Interacts with SCN2A; regulatory subunit of SCN2A/Nav1.2. Contains an interchain disulfide bond with SCN2A. In terms of processing, N-glycosylated. In terms of tissue distribution, expressed at a high level in dorsal root ganglia, at a lower level in brain, spinal cord, skeletal muscle and heart. Expressed in the atrium.

Its subcellular location is the cell membrane. Regulatory subunit of multiple voltage-gated sodium (Nav) channels directly mediating the depolarization of excitable membranes. Navs, also called VGSCs (voltage-gated sodium channels) or VDSCs (voltage-dependent sodium channels), operate by switching between closed and open conformations depending on the voltage difference across the membrane. In the open conformation they allow Na(+) ions to selectively pass through the pore, along their electrochemical gradient. The influx of Na+ ions provokes membrane depolarization, initiating the propagation of electrical signals throughout cells and tissues. The accessory beta subunits participate in localization and functional modulation of the Nav channels. Modulates the activity of SCN1A/Nav1.1. Modulates the activity of SCN2A/Nav1.2. In Homo sapiens (Human), this protein is Sodium channel regulatory subunit beta-4.